We begin with the raw amino-acid sequence, 69 residues long: MSFEVLEQLEARVQSAVDGITLLKMELDELRAQNQQLKEENQHLRNEHQAWQERLRSLLGKMDQMNSEG.

A coiled-coil region spans residues 6–68 (LEQLEARVQS…LGKMDQMNSE (63 aa)).

The protein belongs to the ZapB family. As to quaternary structure, homodimer. The ends of the coiled-coil dimer bind to each other, forming polymers. Interacts with FtsZ.

It is found in the cytoplasm. In terms of biological role, non-essential, abundant cell division factor that is required for proper Z-ring formation. It is recruited early to the divisome by direct interaction with FtsZ, stimulating Z-ring assembly and thereby promoting cell division earlier in the cell cycle. Its recruitment to the Z-ring requires functional FtsA or ZipA. The sequence is that of Cell division protein ZapB from Tolumonas auensis (strain DSM 9187 / NBRC 110442 / TA 4).